We begin with the raw amino-acid sequence, 465 residues long: MAMSVNVSSSSSSGIINSRFGVSLEPKVSQIGSLRLLDRVHVAPVSLNLSGKRSSSVKPLNAEPKTKDSMIPLAATMVAEIAEEVEVVEIEDFEELAKKLENASPLEIMDKALEKYGNDIAIAFSGAEDVALIEYAHLTGRPFRVFSLDTGRLNPETYRFFDAVEKHYGIRIEYMFPDSVEVQGLVRSKGLFSFYEDGHQECCRVRKVRPLRRALKGLKAWITGQRKDQSPGTRSEIPVVQVDPVFEGLDGGVGSLVKWNPVANVEGNDVWNFLRTMDVPVNTLHAAGYISIGCEPCTKAVLPGQHEREGRWWWEDAKAKECGLHKGNVKENSDDAKVNGESKSAVADIFKSENLVTLSRQGIENLMKLENRKEPWIVVLYAPWCPFCQAMEASYDELADKLAGSGIKVAKFRADGDQKEFAKQELQLGSFPTILVFPKNSSRPIKYPSEKRDVESLTSFLNLVR.

A chloroplast-targeting transit peptide spans 1–53 (MAMSVNVSSSSSSGIINSRFGVSLEPKVSQIGSLRLLDRVHVAPVSLNLSGKR). The tract at residues 73-327 (LAATMVAEIA…KAKECGLHKG (255 aa)) is reductase domain. One can recognise a Thioredoxin domain in the interval 344–465 (SAVADIFKSE…SLTSFLNLVR (122 aa)). Catalysis depends on nucleophile residues C385 and C388. A disulfide bond links C385 and C388.

This sequence belongs to the APS reductase family. [4Fe-4S] cluster is required as a cofactor. Leaves, roots and stem.

It localises to the plastid. Its subcellular location is the chloroplast. It catalyses the reaction glutathione disulfide + sulfite + AMP + 2 H(+) = adenosine 5'-phosphosulfate + 2 glutathione. Stimulated by sodium sulfate &gt; ammonium sulfate and is sensitive to inactivation by 5'AMP. Its function is as follows. Reduces sulfate for Cys biosynthesis. Substrate preference is adenosine-5'-phosphosulfate (APS) &gt;&gt; 3'-phosphoadenosine-5'-phosphosulfate (PAPS). Uses glutathione or DTT as source of protons. The protein is 5'-adenylylsulfate reductase 1, chloroplastic (APR1) of Arabidopsis thaliana (Mouse-ear cress).